We begin with the raw amino-acid sequence, 567 residues long: Hexose transporter HXT15 (567 aa).

The span at 1–19 (MASEQSSPEINADNLNSSA) shows a compositional bias: polar residues. Residues 1–32 (MASEQSSPEINADNLNSSAADVHVQPPGEKEW) form a disordered region. The Cytoplasmic portion of the chain corresponds to 1–55 (MASEQSSPEINADNLNSSAADVHVQPPGEKEWSDGFYDKEVINGNTPDAPKRGFL). Residues 56–76 (GYLIIYLLCYPVSFGGFLPGW) traverse the membrane as a helical segment. The Extracellular portion of the chain corresponds to 77–112 (DSGITAGFINMDNFKMNFGSYKHSTGEYYLSNVRMG). Residues 113-133 (LLVAMFSVGCSIGGVAFARLA) form a helical membrane-spanning segment. The Cytoplasmic segment spans residues 134–139 (DTLGRR). The helical transmembrane segment at 140-160 (LAIVIVVLVYMVGAIIQISSN) threads the bilayer. At 161–170 (HKWYQYFVGK) the chain is on the extracellular side. A helical membrane pass occupies residues 171–191 (IIYGLGAGGCSVLCPMLLSEI). Topologically, residues 192–197 (APTDLR) are cytoplasmic. The helical transmembrane segment at 198-218 (GGLVSLYQLNMTFGIFLGYCS) threads the bilayer. Topologically, residues 219-232 (VYGTRKYSNTAQWR) are extracellular. The helical transmembrane segment at 233 to 253 (IPVGLCFLWALIIIVGMLLVP) threads the bilayer. Residues 254–336 (ESPRYLIECE…VQTFLQLTGE (83 aa)) lie on the Cytoplasmic side of the membrane. The helical transmembrane segment at 337-353 (NYFFFYGTTIFKSVGLT) threads the bilayer. The Extracellular segment spans residues 354–359 (DGFETS). A helical membrane pass occupies residues 360–377 (IVLGTVNFFSTIIAVMVV). Topologically, residues 378 to 384 (DKIGRRK) are cytoplasmic. The chain crosses the membrane as a helical span at residues 385–405 (CLLFGAASMMACMVIFASIGV). Residues 406 to 427 (KCLYPHGQDGPSSKGAGNAMIV) are Extracellular-facing. A helical transmembrane segment spans residues 428–448 (FTCFYIFCFATTWAPVAYIVV). Residues 449-465 (AESFPSKVKSKAMSIST) are Cytoplasmic-facing. Residues 466–486 (AFNWLWQFLIGFFTPFITGSI) traverse the membrane as a helical segment. His-487 is a topological domain (extracellular). A helical membrane pass occupies residues 488-508 (FYYGYVFVGCLVAMFLYVFFF). Over 509 to 567 (LPETIGLSLEEIQLLYEEGIKPWKSASWVPPSRRGASSRETEAKKKSWKEVLKFPKSFN) the chain is Cytoplasmic. The disordered stretch occupies residues 533–555 (SASWVPPSRRGASSRETEAKKKS). Over residues 545–555 (SSRETEAKKKS) the composition is skewed to basic and acidic residues.

This sequence belongs to the major facilitator superfamily. Sugar transporter (TC 2.A.1.1) family.

The protein resides in the membrane. In terms of biological role, probable glucose transporter. This chain is Hexose transporter HXT15 (HXT15), found in Saccharomyces cerevisiae (strain ATCC 204508 / S288c) (Baker's yeast).